The chain runs to 267 residues: Tryptophan synthase alpha chain (267 aa).

Residues glutamate 49 and aspartate 60 each act as proton acceptor in the active site.

It belongs to the TrpA family. Tetramer of two alpha and two beta chains.

The enzyme catalyses (1S,2R)-1-C-(indol-3-yl)glycerol 3-phosphate + L-serine = D-glyceraldehyde 3-phosphate + L-tryptophan + H2O. The protein operates within amino-acid biosynthesis; L-tryptophan biosynthesis; L-tryptophan from chorismate: step 5/5. Its function is as follows. The alpha subunit is responsible for the aldol cleavage of indoleglycerol phosphate to indole and glyceraldehyde 3-phosphate. The chain is Tryptophan synthase alpha chain from Citrifermentans bemidjiense (strain ATCC BAA-1014 / DSM 16622 / JCM 12645 / Bem) (Geobacter bemidjiensis).